The sequence spans 266 residues: Heat-inducible transcription repressor HrcA (266 aa).

This sequence belongs to the HrcA family.

In terms of biological role, negative regulator of class I heat shock genes (grpE-dnaK-dnaJ and groELS operons). Prevents heat-shock induction of these operons. The polypeptide is Heat-inducible transcription repressor HrcA (Helicobacter pylori (strain ATCC 700392 / 26695) (Campylobacter pylori)).